A 122-amino-acid polypeptide reads, in one-letter code: Putative syntaxin 6 (122 aa).

Residues 1–100 (MSNYRYSKLN…AKLTHLEDES (100 aa)) lie on the Cytoplasmic side of the membrane. Residues 31–93 (EQIIQEQDDE…DTAMKKMAKL (63 aa)) form the t-SNARE coiled-coil homology domain. A helical; Anchor for type IV membrane protein transmembrane segment spans residues 101-121 (SQCKMIMVLSALLFFLVFVLL). Valine 122 is a topological domain (extracellular).

The protein belongs to the syntaxin family.

Its subcellular location is the membrane. Its function is as follows. SNARE promoting movement of transport vesicles to target membranes. Potentially functions in retrograde trafficking and in the endocytic recycling pathway. The protein is Putative syntaxin 6 (syx-6) of Caenorhabditis elegans.